Here is a 2142-residue protein sequence, read N- to C-terminus: U5 small nuclear ribonucleoprotein 200 kDa helicase (2142 aa).

Disordered regions lie at residues 52-74, 211-234, and 366-396; these read MGDR…RQKR, EESE…QDEG, and RQLD…DGGA. Positions 369–391 are enriched in basic and acidic residues; it reads DTGKSEDQEEGEARGSKRGKGDA. The Helicase ATP-binding 1 domain occupies 490–673; sequence KAALDSDENM…FLRVKPDKGL (184 aa). Position 503 to 510 (503 to 510) interacts with ATP; it reads APTGAGKT. Positions 615 to 618 match the DEIH box motif; the sequence is DEIH. In terms of domain architecture, Helicase C-terminal 1 spans 684 to 917; sequence SLEQQYIGVT…GTVQHLQDAV (234 aa). Residues 981 to 1286 form the SEC63 1 domain; sequence VTDLGRIASH…GAETQLPVSF (306 aa). The region spanning 1337–1511 is the Helicase ATP-binding 2 domain; it reads NAVYNSDENV…WLGCNPNATF (175 aa). An ATP-binding site is contributed by 1350-1357; that stretch reads APTGSGKM. The DELQ box motif lies at 1453–1456; sequence DELQ. The 209-residue stretch at 1544–1752 folds into the Helicase C-terminal 2 domain; it reads PVYNAILKYS…TIENKQDAVD (209 aa). Residues 1811-2128 enclose the SEC63 2 domain; the sequence is PLNLGMIAAY…GCDQEYKFSI (318 aa).

Belongs to the helicase family. SKI2 subfamily.

It localises to the nucleus. It carries out the reaction ATP + H2O = ADP + phosphate + H(+). Functionally, catalyzes the ATP-dependent unwinding of U4/U6 RNA duplices, an essential step in the assembly of a catalytically active spliceosome. Plays a role in pre-mRNA splicing. In Drosophila melanogaster (Fruit fly), this protein is U5 small nuclear ribonucleoprotein 200 kDa helicase.